We begin with the raw amino-acid sequence, 169 residues long: Sorting nexin-24 (169 aa).

At Met1 the chain carries N-acetylmethionine. Residues 1–125 (MEVYIPSFRH…SFDETESEES (125 aa)) enclose the PX domain. Residues Arg38, Ser40, Lys61, and Arg74 each coordinate a 1,2-diacyl-sn-glycero-3-phospho-(1D-myo-inositol-3-phosphate). Phosphoserine is present on residues Ser113 and Ser116.

This sequence belongs to the sorting nexin family.

The protein localises to the cytoplasmic vesicle membrane. Functionally, may be involved in several stages of intracellular trafficking. The polypeptide is Sorting nexin-24 (Snx24) (Rattus norvegicus (Rat)).